The sequence spans 239 residues: Cysteine-rich venom protein ophanin (239 aa).

The N-terminal stretch at 1–18 (MIAFTLLSLAAVLQQSFG) is a signal peptide. An SCP domain is found at 37–165 (VDLHNSLRRS…EYSYFYVCQY (129 aa)). 8 disulfides stabilise this stretch: cysteine 74/cysteine 152, cysteine 91/cysteine 166, cysteine 147/cysteine 163, cysteine 185/cysteine 192, cysteine 188/cysteine 197, cysteine 201/cysteine 234, cysteine 210/cysteine 228, and cysteine 219/cysteine 232. Positions 201 to 234 (CTLYNEYTNCDSLVKQSSCQDEWIKSKCPASCFC) constitute a ShKT domain.

In terms of tissue distribution, expressed by the venom gland.

The protein resides in the secreted. Weakly blocks contraction of smooth muscle elicited by high potassium-induced depolarization, but does not block caffeine-stimulated contraction. May target voltage-gated calcium channels on smooth muscle. The sequence is that of Cysteine-rich venom protein ophanin from Ophiophagus hannah (King cobra).